Here is a 209-residue protein sequence, read N- to C-terminus: Large ribosomal subunit protein uL4 (209 aa).

Residues 46-71 (GTSSTKTRSEVRGSSKKPWKQKGTGR) are disordered. The segment covering 59–71 (SSKKPWKQKGTGR) has biased composition (basic residues).

The protein belongs to the universal ribosomal protein uL4 family. Part of the 50S ribosomal subunit.

One of the primary rRNA binding proteins, this protein initially binds near the 5'-end of the 23S rRNA. It is important during the early stages of 50S assembly. It makes multiple contacts with different domains of the 23S rRNA in the assembled 50S subunit and ribosome. Functionally, forms part of the polypeptide exit tunnel. The chain is Large ribosomal subunit protein uL4 from Borrelia garinii subsp. bavariensis (strain ATCC BAA-2496 / DSM 23469 / PBi) (Borreliella bavariensis).